We begin with the raw amino-acid sequence, 298 residues long: Putative GATA zinc finger domain-containing protein 25 (298 aa).

A coiled-coil region spans residues 4–37 (DNKNKNDNYQESIQRIVNQRNNLLKEIENKINQQ). A disordered region spans residues 148–227 (QQQLQQSHTK…RGRPSKPKPE (80 aa)). The segment covering 183-202 (EENEENEENEENEENEENEE) has biased composition (acidic residues). Residues 203–212 (NKEKDVEVAK) are compositionally biased toward basic and acidic residues. Residues 214–223 (NKPKRGRPSK) are compositionally biased toward basic residues. The GATA-type; degenerate zinc finger occupies 229 to 256 (CFRYGTRSCPYWRKNVIKGELVDVCNAC).

The chain is Putative GATA zinc finger domain-containing protein 25 (gtaY) from Dictyostelium discoideum (Social amoeba).